The chain runs to 417 residues: UDP-N-acetylglucosamine 1-carboxyvinyltransferase (417 aa).

Position 22–23 (22–23 (KN)) interacts with phosphoenolpyruvate. Residue Arg93 participates in UDP-N-acetyl-alpha-D-glucosamine binding. Cys117 acts as the Proton donor in catalysis. Residue Cys117 is modified to 2-(S-cysteinyl)pyruvic acid O-phosphothioketal. UDP-N-acetyl-alpha-D-glucosamine contacts are provided by residues 122–126 (RPVDQ), Asp305, and Ile327.

The protein belongs to the EPSP synthase family. MurA subfamily.

The protein localises to the cytoplasm. It catalyses the reaction phosphoenolpyruvate + UDP-N-acetyl-alpha-D-glucosamine = UDP-N-acetyl-3-O-(1-carboxyvinyl)-alpha-D-glucosamine + phosphate. It functions in the pathway cell wall biogenesis; peptidoglycan biosynthesis. Cell wall formation. Adds enolpyruvyl to UDP-N-acetylglucosamine. The sequence is that of UDP-N-acetylglucosamine 1-carboxyvinyltransferase from Nitrosomonas europaea (strain ATCC 19718 / CIP 103999 / KCTC 2705 / NBRC 14298).